We begin with the raw amino-acid sequence, 251 residues long: Octanoyltransferase (251 aa).

The region spanning 56 to 241 (ADTGDEIWVV…NLDGASAAAD (186 aa)) is the BPL/LPL catalytic domain. Residues 96 to 103 (RGGQITYH), 168 to 170 (ALG), and 181 to 183 (GLS) contribute to the substrate site. The Acyl-thioester intermediate role is filled by Cys-199.

It belongs to the LipB family.

The protein localises to the cytoplasm. The catalysed reaction is octanoyl-[ACP] + L-lysyl-[protein] = N(6)-octanoyl-L-lysyl-[protein] + holo-[ACP] + H(+). Its pathway is protein modification; protein lipoylation via endogenous pathway; protein N(6)-(lipoyl)lysine from octanoyl-[acyl-carrier-protein]: step 1/2. In terms of biological role, catalyzes the transfer of endogenously produced octanoic acid from octanoyl-acyl-carrier-protein onto the lipoyl domains of lipoate-dependent enzymes. Lipoyl-ACP can also act as a substrate although octanoyl-ACP is likely to be the physiological substrate. The chain is Octanoyltransferase from Burkholderia cenocepacia (strain HI2424).